The sequence spans 184 residues: Large ribosomal subunit protein uL22 (184 aa).

The tract at residues 160 to 184 (PEEEVAQKKKISQKKLKKQKLMARE) is disordered. Basic residues predominate over residues 167–184 (KKKISQKKLKKQKLMARE).

This sequence belongs to the universal ribosomal protein uL22 family. As to quaternary structure, component of the large ribosomal subunit.

Its subcellular location is the cytoplasm. Component of the large ribosomal subunit. The ribosome is a large ribonucleoprotein complex responsible for the synthesis of proteins in the cell. This is Large ribosomal subunit protein uL22 (RPL17) from Bos taurus (Bovine).